Consider the following 76-residue polypeptide: Sec-independent protein translocase protein TatA (76 aa).

Residues Met-1–Gly-21 traverse the membrane as a helical segment. The segment at Arg-44–Ser-76 is disordered. Residues Gln-55 to Ala-65 are compositionally biased toward polar residues.

The protein belongs to the TatA/E family. The Tat system comprises two distinct complexes: a TatABC complex, containing multiple copies of TatA, TatB and TatC subunits, and a separate TatA complex, containing only TatA subunits. Substrates initially bind to the TatABC complex, which probably triggers association of the separate TatA complex to form the active translocon.

It localises to the cell inner membrane. Its function is as follows. Part of the twin-arginine translocation (Tat) system that transports large folded proteins containing a characteristic twin-arginine motif in their signal peptide across membranes. TatA could form the protein-conducting channel of the Tat system. This Methylibium petroleiphilum (strain ATCC BAA-1232 / LMG 22953 / PM1) protein is Sec-independent protein translocase protein TatA.